The chain runs to 93 residues: Small ribosomal subunit protein uS19 (93 aa).

This sequence belongs to the universal ribosomal protein uS19 family.

Functionally, protein S19 forms a complex with S13 that binds strongly to the 16S ribosomal RNA. In Dehalococcoides mccartyi (strain ATCC BAA-2100 / JCM 16839 / KCTC 5957 / BAV1), this protein is Small ribosomal subunit protein uS19.